Consider the following 706-residue polypeptide: Fatty acid oxidation complex subunit alpha (706 aa).

The interval 1–188 (MEKTFNLTRR…KMGLVNDVVP (188 aa)) is enoyl-CoA hydratase. Positions 308–706 (RKVKKAVILG…TMAQENAHFF (399 aa)) are 3-hydroxyacyl-CoA dehydrogenase.

It in the N-terminal section; belongs to the enoyl-CoA hydratase/isomerase family. This sequence in the central section; belongs to the 3-hydroxyacyl-CoA dehydrogenase family. As to quaternary structure, heterotetramer of two alpha chains (FadJ) and two beta chains (FadI).

Its subcellular location is the cytoplasm. The catalysed reaction is a (3S)-3-hydroxyacyl-CoA = a (2E)-enoyl-CoA + H2O. It carries out the reaction a 4-saturated-(3S)-3-hydroxyacyl-CoA = a (3E)-enoyl-CoA + H2O. It catalyses the reaction a (3S)-3-hydroxyacyl-CoA + NAD(+) = a 3-oxoacyl-CoA + NADH + H(+). The enzyme catalyses (3S)-3-hydroxybutanoyl-CoA = (3R)-3-hydroxybutanoyl-CoA. It functions in the pathway lipid metabolism; fatty acid beta-oxidation. Catalyzes the formation of a hydroxyacyl-CoA by addition of water on enoyl-CoA. Also exhibits 3-hydroxyacyl-CoA epimerase and 3-hydroxyacyl-CoA dehydrogenase activities. In Shewanella baltica (strain OS185), this protein is Fatty acid oxidation complex subunit alpha.